Here is a 293-residue protein sequence, read N- to C-terminus: Homeobox protein ceh-24 (293 aa).

2 stretches are compositionally biased toward basic and acidic residues: residues 1–15 and 22–38; these read MSEK…KKDE and QETK…MKIK. Disordered regions lie at residues 1–38 and 203–256; these read MSEK…MKIK and EKEK…SNGV. The segment at residues 144–203 is a DNA-binding region (homeobox); it reads RRKRRVLFSQAQVYELERRFKQAKYLTAPEREQLANSIRLTPTQVKIWFQNHRYKCKRQE.

It belongs to the NK-2 homeobox family. Expressed in the 8 vulval muscles, 8-10 ventral neurons in the head and in the most posterior pharyngeal muscle cell, m8.

Its subcellular location is the nucleus. Its function is as follows. Probable transcriptional regulator that is required in neural development for the normal formation of sublateral cholinergic motor neuron processes. Plays a role in regulating the expression of acetylcholine transporter protein unc-17 in the sublateral processes. In particular, it is required in sublateral motor neurons for a left-right turning behavior that occurs during the lethargus phase of the normal sleep process called 'flipping'. During 'flipping' animals rotate 180 degrees about their longitudinal axis. This chain is Homeobox protein ceh-24, found in Caenorhabditis briggsae.